A 260-amino-acid polypeptide reads, in one-letter code: Snake venom serine protease homolog (260 aa).

Residues 1-18 form the signal peptide; the sequence is MVLVRVLANLLMLQLSYA. Positions 19-24 are excised as a propeptide; sequence QKSSEL. In terms of domain architecture, Peptidase S1 spans 25 to 251; the sequence is IIGGDECNIN…HLNWIQSIIA (227 aa). Cystine bridges form between Cys-31-Cys-165, Cys-52-Cys-68, Cys-100-Cys-258, Cys-144-Cys-212, Cys-176-Cys-191, and Cys-202-Cys-227. Residues Asn-123 and Asn-124 are each glycosylated (N-linked (GlcNAc...) asparagine). A glycan (N-linked (GlcNAc...) asparagine) is linked at Asn-253.

Belongs to the peptidase S1 family. Snake venom subfamily. Expressed by the venom gland.

It localises to the secreted. In terms of biological role, snake venom serine protease homolog that may act in the hemostasis system of the prey. The sequence is that of Snake venom serine protease homolog from Protobothrops jerdonii (Jerdon's pitviper).